We begin with the raw amino-acid sequence, 269 residues long: Gene 69 protein (269 aa).

The chain is Gene 69 protein (69) from Mycobacterium (Mycobacteriophage D29).